Reading from the N-terminus, the 369-residue chain is Transaldolase (369 aa).

The active-site Schiff-base intermediate with substrate is the lysine 140.

Belongs to the transaldolase family. Type 2 subfamily.

It localises to the cytoplasm. It carries out the reaction D-sedoheptulose 7-phosphate + D-glyceraldehyde 3-phosphate = D-erythrose 4-phosphate + beta-D-fructose 6-phosphate. The protein operates within carbohydrate degradation; pentose phosphate pathway; D-glyceraldehyde 3-phosphate and beta-D-fructose 6-phosphate from D-ribose 5-phosphate and D-xylulose 5-phosphate (non-oxidative stage): step 2/3. Transaldolase is important for the balance of metabolites in the pentose-phosphate pathway. The protein is Transaldolase of Parafrankia sp. (strain EAN1pec).